A 333-amino-acid chain; its full sequence is Putative fimbrium anchoring subunit Fim4B (333 aa).

The first 20 residues, 1-20 (MRNTRYGFLVLLSSLLMLTG), serve as a signal peptide directing secretion. Residue Cys-21 is the site of N-palmitoyl cysteine attachment. Cys-21 carries the S-diacylglycerol cysteine lipid modification. Positions 274 to 333 (ENAGTGEDGKPTPPPEIELPPDDKIEVDKPETPPNPDGGGGMGGNVDGWGPEDNVELPVN) are disordered. Positions 294–304 (PDDKIEVDKPE) are enriched in basic and acidic residues. Over residues 310–320 (DGGGGMGGNVD) the composition is skewed to gly residues.

Belongs to the bacteroidetes fimbrillin superfamily. FimB/Mfa2 family.

The protein resides in the cell outer membrane. In terms of biological role, putative fimbrium anchoring subunit. The polypeptide is Putative fimbrium anchoring subunit Fim4B (Bacteroides ovatus (strain ATCC 8483 / DSM 1896 / JCM 5824 / BCRC 10623 / CCUG 4943 / NCTC 11153)).